The following is a 443-amino-acid chain: ATP-dependent protease ATPase subunit HslU (443 aa).

ATP is bound by residues I18, 60–65 (GVGKTE), D256, E321, and R393.

It belongs to the ClpX chaperone family. HslU subfamily. A double ring-shaped homohexamer of HslV is capped on each side by a ring-shaped HslU homohexamer. The assembly of the HslU/HslV complex is dependent on binding of ATP.

The protein localises to the cytoplasm. ATPase subunit of a proteasome-like degradation complex; this subunit has chaperone activity. The binding of ATP and its subsequent hydrolysis by HslU are essential for unfolding of protein substrates subsequently hydrolyzed by HslV. HslU recognizes the N-terminal part of its protein substrates and unfolds these before they are guided to HslV for hydrolysis. The protein is ATP-dependent protease ATPase subunit HslU of Buchnera aphidicola subsp. Acyrthosiphon pisum (strain APS) (Acyrthosiphon pisum symbiotic bacterium).